Here is a 240-residue protein sequence, read N- to C-terminus: MGKAQPLPILITGGGRRIGLALAWHFINQKQPVIVSYRTHYPAIDGLIKAGAQCIQADFSTNDGVMAFADEVLKSTHGLRAILHNASAWMAEKLGAPLADVLACMMQIHVNTPYLLNHALERLLRGHGHAASDIIHFTDYVVERGSDKHIAYAASKAALDNMTRSFARKLAPEVKVNSIAPSLILFNEHDDAEYRQQALNKSLMKTAPGEKEVIDLVDYLLTSCFVTGRSFPLDGGRHLR.

Tyr-152 acts as the Proton acceptor in catalysis.

This sequence belongs to the short-chain dehydrogenases/reductases (SDR) family. FolM subfamily.

The catalysed reaction is (6S)-5,6,7,8-tetrahydrofolate + NADP(+) = 7,8-dihydrofolate + NADPH + H(+). The enzyme catalyses 7,8-dihydromonapterin + NADPH + H(+) = 5,6,7,8-tetrahydromonapterin + NADP(+). Catalyzes the reduction of dihydromonapterin to tetrahydromonapterin. Also has lower activity with dihydrofolate. The protein is Dihydromonapterin reductase (folM) of Shigella boydii serotype 4 (strain Sb227).